The primary structure comprises 397 residues: Tryptophan synthase beta chain (397 aa).

An N6-(pyridoxal phosphate)lysine modification is found at Lys-87.

It belongs to the TrpB family. As to quaternary structure, tetramer of two alpha and two beta chains. Pyridoxal 5'-phosphate is required as a cofactor.

It catalyses the reaction (1S,2R)-1-C-(indol-3-yl)glycerol 3-phosphate + L-serine = D-glyceraldehyde 3-phosphate + L-tryptophan + H2O. The protein operates within amino-acid biosynthesis; L-tryptophan biosynthesis; L-tryptophan from chorismate: step 5/5. In terms of biological role, the beta subunit is responsible for the synthesis of L-tryptophan from indole and L-serine. This is Tryptophan synthase beta chain from Salmonella agona (strain SL483).